The chain runs to 385 residues: 1-deoxy-D-xylulose 5-phosphate reductoisomerase (385 aa).

The NADPH site is built by Thr-10, Gly-11, Ser-12, Ile-13, and Asn-124. Lys-125 serves as a coordination point for 1-deoxy-D-xylulose 5-phosphate. Glu-126 lines the NADPH pocket. Asp-150 provides a ligand contact to Mn(2+). Residues Ser-151, Glu-152, Ser-176, and His-199 each contribute to the 1-deoxy-D-xylulose 5-phosphate site. Glu-152 lines the Mn(2+) pocket. Position 205 (Gly-205) interacts with NADPH. 1-deoxy-D-xylulose 5-phosphate is bound by residues Ser-212, Asn-217, Lys-218, and Glu-221. Glu-221 contributes to the Mn(2+) binding site.

It belongs to the DXR family. It depends on Mg(2+) as a cofactor. The cofactor is Mn(2+).

It carries out the reaction 2-C-methyl-D-erythritol 4-phosphate + NADP(+) = 1-deoxy-D-xylulose 5-phosphate + NADPH + H(+). It participates in isoprenoid biosynthesis; isopentenyl diphosphate biosynthesis via DXP pathway; isopentenyl diphosphate from 1-deoxy-D-xylulose 5-phosphate: step 1/6. Catalyzes the NADPH-dependent rearrangement and reduction of 1-deoxy-D-xylulose-5-phosphate (DXP) to 2-C-methyl-D-erythritol 4-phosphate (MEP). This is 1-deoxy-D-xylulose 5-phosphate reductoisomerase from Clostridium botulinum (strain Eklund 17B / Type B).